A 321-amino-acid polypeptide reads, in one-letter code: tRNA(Ile)-lysidine synthase (321 aa).

Position 20–25 (20–25) interacts with ATP; it reads SGGADS.

It belongs to the tRNA(Ile)-lysidine synthase family.

The protein localises to the cytoplasm. It carries out the reaction cytidine(34) in tRNA(Ile2) + L-lysine + ATP = lysidine(34) in tRNA(Ile2) + AMP + diphosphate + H(+). Its function is as follows. Ligates lysine onto the cytidine present at position 34 of the AUA codon-specific tRNA(Ile) that contains the anticodon CAU, in an ATP-dependent manner. Cytidine is converted to lysidine, thus changing the amino acid specificity of the tRNA from methionine to isoleucine. The polypeptide is tRNA(Ile)-lysidine synthase (Bordetella pertussis (strain Tohama I / ATCC BAA-589 / NCTC 13251)).